The chain runs to 476 residues: NADH-quinone oxidoreductase subunit N (476 aa).

The next 14 helical transmembrane spans lie at 5-25 (LALIWPELILTIGGLITLMLG), 38-58 (LSALLTLAAAAAAAIALFGVE), 70-90 (AFGGFAKLLIYAASFICILVA), 97-117 (GMRAEYPTLILFAALGMGIMA), 122-142 (LMTLYVGLELNSLAAYVLASF), 157-177 (FVLGALASGMLLYGISLLYGF), 196-218 (IGLIFGIVFVLSGLGFKISAVPF), 231-253 (TPVTTFFASAPKVAAMALMARIV), 264-284 (WQQIVIFLALASIILGAVGAI), 292-312 (LLAYSSINNVGFMLIGLAAGT), 318-338 (GVLTYLLVYLVTTLGAFLVVL), 364-384 (LAAAMSVFLFSLAGIPPLFGF), 401-421 (PLAVAGIVASVIGAFYYIAII), and 445-465 (IVAASALWLLAVGYLFIPALA).

It belongs to the complex I subunit 2 family. NDH-1 is composed of 14 different subunits. Subunits NuoA, H, J, K, L, M, N constitute the membrane sector of the complex.

It is found in the cell inner membrane. The catalysed reaction is a quinone + NADH + 5 H(+)(in) = a quinol + NAD(+) + 4 H(+)(out). NDH-1 shuttles electrons from NADH, via FMN and iron-sulfur (Fe-S) centers, to quinones in the respiratory chain. The immediate electron acceptor for the enzyme in this species is believed to be ubiquinone. Couples the redox reaction to proton translocation (for every two electrons transferred, four hydrogen ions are translocated across the cytoplasmic membrane), and thus conserves the redox energy in a proton gradient. The chain is NADH-quinone oxidoreductase subunit N from Sphingopyxis alaskensis (strain DSM 13593 / LMG 18877 / RB2256) (Sphingomonas alaskensis).